The sequence spans 61 residues: UPF0391 membrane protein Bpro_0066 (61 aa).

2 helical membrane-spanning segments follow: residues Ala5–Ala25 and Ile33–Val53.

This sequence belongs to the UPF0391 family.

The protein resides in the cell membrane. This chain is UPF0391 membrane protein Bpro_0066, found in Polaromonas sp. (strain JS666 / ATCC BAA-500).